The primary structure comprises 384 residues: Trophoblast glycoprotein-like (384 aa).

A signal peptide spans 1–30; sequence MAPRAGQRGLWSPLPGLLLLAAALSRPAAP. Cystine bridges form between C31–C37 and C35–C47. Topologically, residues 31-309 are extracellular; sequence CPFQCYCFGS…DVAGPELEAS (279 aa). LRR repeat units lie at residues 61–84, 95–118, 119–142, 173–196, and 198–219; these read PPDARNLTIVGANLTVLRAAAFAG, LPLLTALRLTHNNIEVVEDGAFDG, LPSLAALDLSHNPLRALGYRAFRG, LAELRLLGLVGNALSRLPLAALRL, and RLEQLDARVNALAGLGPDELSA. Residue N66 is glycosylated (N-linked (GlcNAc...) asparagine). Intrachain disulfides connect C240/C266 and C242/C287. The chain crosses the membrane as a helical span at residues 310 to 330; it reads YVFFGLVLALIGLIFLMVLYL. Residues 331 to 384 are Cytoplasmic-facing; the sequence is NRRGIQRWMHNLREACRDQMEGYHYRYEQDADPRRAPAPAAPAGSRATSPGSGL. A disordered region spans residues 361–384; it reads ADPRRAPAPAAPAGSRATSPGSGL. Low complexity predominate over residues 367–384; the sequence is PAPAAPAGSRATSPGSGL.

The protein localises to the membrane. In Mus musculus (Mouse), this protein is Trophoblast glycoprotein-like (Tpbgl).